The chain runs to 470 residues: Glutamate--tRNA ligase (470 aa).

The short motif at 12–22 (PSPTGIFHVGG) is the 'HIGH' region element. Zn(2+)-binding residues include Cys-103, Cys-105, Cys-125, and Asp-127. The short motif at 236–240 (KLSKR) is the 'KMSKS' region element. Lys-239 contacts ATP.

The protein belongs to the class-I aminoacyl-tRNA synthetase family. Glutamate--tRNA ligase type 1 subfamily. As to quaternary structure, monomer. Requires Zn(2+) as cofactor.

Its subcellular location is the cytoplasm. It carries out the reaction tRNA(Glu) + L-glutamate + ATP = L-glutamyl-tRNA(Glu) + AMP + diphosphate. Its function is as follows. Catalyzes the attachment of glutamate to tRNA(Glu) in a two-step reaction: glutamate is first activated by ATP to form Glu-AMP and then transferred to the acceptor end of tRNA(Glu). This Frankia casuarinae (strain DSM 45818 / CECT 9043 / HFP020203 / CcI3) protein is Glutamate--tRNA ligase.